A 2203-amino-acid polypeptide reads, in one-letter code: Voltage-dependent L-type calcium channel subunit alpha-1D (2203 aa).

Disordered stretches follow at residues 1 to 51 (MMMM…QTVL) and 64 to 100 (KAAQTMSTSAPPPVGSLSQRKRQQYAKSKKQGNSSNS). At 1–126 (MMMMMMMKKM…RACISIVDWK (126 aa)) the chain is on the cytoplasmic side. Residues 38–51 (GPTSQPNSSKQTVL) are compositionally biased toward polar residues. Basic residues predominate over residues 82–93 (QRKRQQYAKSKK). Residues 112–408 (NNPIRRACIS…NLVLGVLSGE (297 aa)) form an I repeat. A helical membrane pass occupies residues 127–145 (PFDIFILLAIFANCVALAI). At 146-163 (YIPFPEDDSNSTNHNLEK) the chain is on the extracellular side. Residue N155 is glycosylated (N-linked (GlcNAc...) asparagine). A helical transmembrane segment spans residues 164 to 183 (VEYAFLIIFTVETFLKIIAS). The Cytoplasmic segment spans residues 184–195 (GLLLHPNASVRN). The chain crosses the membrane as a helical span at residues 196 to 214 (GWNLLDFVIVIVGLFSVIL). The Extracellular portion of the chain corresponds to 215 to 235 (EQLTKETEGGNHSSGKSGGFD). N225 carries an N-linked (GlcNAc...) asparagine glycan. The chain crosses the membrane as a helical span at residues 236–254 (VKALRAFRVLRPLRLVSGV). The Cytoplasmic segment spans residues 255–273 (PSLQVVLNSIIKAMVPLLH). The chain crosses the membrane as a helical span at residues 274 to 293 (IALLVLFVIIIYAIIGLELF). Topologically, residues 294 to 381 (IGKMHKTCFF…WVNDAIGWEW (88 aa)) are extracellular. N329 carries N-linked (GlcNAc...) asparagine glycosylation. Ca(2+) is bound at residue E364. The helical transmembrane segment at 382–406 (PWVYFVSLIILGSFFVLNLVLGVLS) threads the bilayer. Over 407-582 (GEFSKEREKA…RRCRAAVKSV (176 aa)) the chain is Cytoplasmic. Residues 429-446 (QQLEEDLKGYLDWITQAE) form a binding to the beta subunit region. Positions 449 to 480 (DPENEEEGGEEGKRNTSMPTSETESVNTENVS) are disordered. Positions 463–479 (NTSMPTSETESVNTENV) are enriched in polar residues. An II repeat occupies 528–774 (EALCVCRCSL…DWNAVMYDGI (247 aa)). A helical transmembrane segment spans residues 583-602 (TFYWLVIVLVFLNTLTISSE). The Extracellular segment spans residues 603–617 (HYNQPDWLTQIQDIA). The chain crosses the membrane as a helical span at residues 618–636 (NKVLLALFTCEMLVKMYSL). Residues 637–644 (GLQAYFVS) are Cytoplasmic-facing. Residues 645-663 (LFNRFDCFVVCGGITETIL) traverse the membrane as a helical segment. Residues 664–673 (VELELMSPLG) lie on the Extracellular side of the membrane. The helical transmembrane segment at 674–692 (VSVFRCVRLLRIFKVTRHW) threads the bilayer. Over 693–711 (TSLSNLVASLLNSMKSIAS) the chain is Cytoplasmic. A helical transmembrane segment spans residues 712–732 (LLLLLFLFIIIFSLLGMQLFG). The Extracellular segment spans residues 733-786 (GKFNFDETQTKRSTFDNFPQALLTVFQILTGEDWNAVMYDGIMAYGGPSSSGMI). E764 contributes to the Ca(2+) binding site. The helical transmembrane segment at 787–811 (VCIYFIILFICGNYILLKLFLAIAV) threads the bilayer. At 812-945 (DNLADAESLN…VGCHKLINHH (134 aa)) the chain is on the cytoplasmic side. Residues 822-909 (TAQKEEAEEK…AGPRPRRISE (88 aa)) are disordered. The span at 824 to 849 (QKEEAEEKERKKIARKESLENKKNNK) shows a compositional bias: basic and acidic residues. The segment covering 850 to 861 (PEVNQIANSDNK) has biased composition (polar residues). Residues 884 to 897 (VGEEEEEEEEDEPE) show a composition bias toward acidic residues. An III repeat occupies 892–1174 (EEDEPEVPAG…LLYKAIDSNG (283 aa)). Residues 946–964 (IFTNLILVFIMLSSAALAA) traverse the membrane as a helical segment. Topologically, residues 965–980 (EDPIRSHSFRNTILGY) are extracellular. The chain crosses the membrane as a helical span at residues 981–1000 (FDYAFTAIFTVEILLKMTTF). The Cytoplasmic portion of the chain corresponds to 1001–1012 (GAFLHKGAFCRN). The chain crosses the membrane as a helical span at residues 1013–1031 (YFNLLDMLVVGVSLVSFGI). Over 1032–1037 (QSSAIS) the chain is Extracellular. The chain crosses the membrane as a helical span at residues 1038-1057 (VVKILRVLRVLRPLRAINRA). Residues 1058–1076 (KGLKHVVQCVFVAIRTIGN) are Cytoplasmic-facing. The chain crosses the membrane as a helical span at residues 1077–1096 (IMIVTTLLQFMFACIGVQLF). At 1097–1186 (KGKFYRCTDE…VGPVYNYRVE (90 aa)) the chain is on the extracellular side. The interval 1134 to 1224 (RIWQNSDFNF…QEQGEKEYKN (91 aa)) is dihydropyridine binding. Residue E1160 coordinates Ca(2+). A helical membrane pass occupies residues 1187–1207 (ISIFFIIYIIIVAFFMMNIFV). Over 1208–1264 (GFVIVTFQEQGEKEYKNCELDKNQRQCVEYALKARPLRRYIPKNPYQYKFWYVVNSS) the chain is Cytoplasmic. One copy of the IV repeat lies at 1211 to 1486 (IVTFQEQGEK…YTCGSNFAIV (276 aa)). The helical transmembrane segment at 1265 to 1283 (PFEYMMFVLIMLNTLCLAM) threads the bilayer. At 1284–1298 (QHYEQSKMFNDAMDI) the chain is on the extracellular side. Residues 1299–1318 (LNMVFTGVFTVEMVLKVIAF) form a helical membrane-spanning segment. At 1319-1325 (KPKGYFS) the chain is on the cytoplasmic side. Residues 1326-1347 (DAWNTFDSLIVIGSIIDVALSE) traverse the membrane as a helical segment. Over 1348–1357 (ADNSEESNRI) the chain is Extracellular. A helical transmembrane segment spans residues 1358–1377 (SITFFRLFRVMRLVKLLSRG). Residues 1378 to 1396 (EGIRTLLWTFIKSFQALPY) lie on the Cytoplasmic side of the membrane. Residues 1397-1416 (VALLIAMLFFIYAVIGMQMF) traverse the membrane as a helical segment. Over 1417-1483 (GKVAMRDNNQ…GEEYTCGSNF (67 aa)) the chain is Extracellular. A dihydropyridine binding region spans residues 1464–1530 (LCDPDSDYNP…LGPHHLDEFK (67 aa)). A phenylalkylamine binding region spans residues 1476 to 1519 (EYTCGSNFAIVYFISFYMLCAFLIINLFVAVIMDNFDYLTRDWS). A helical transmembrane segment spans residues 1484-1508 (AIVYFISFYMLCAFLIINLFVAVIM). Topologically, residues 1509 to 2203 (DNFDYLTRDW…ADEMICITTL (695 aa)) are cytoplasmic. Disordered stretches follow at residues 1734 to 1766 (NHVNSDRRESLQQTNTTHRPLHVQRPSIPPASD), 1795 to 1816 (TSTNANLNNANMSKAAHGKRPS), 1920 to 1963 (FERP…HRRS), and 2176 to 2195 (GPGYSDEEPDPGREEEDLAD). The span at 1795-1806 (TSTNANLNNANM) shows a compositional bias: polar residues. The span at 2180-2195 (SDEEPDPGREEEDLAD) shows a compositional bias: acidic residues.

The protein belongs to the calcium channel alpha-1 subunit (TC 1.A.1.11) family. CACNA1D subfamily. As to quaternary structure, voltage-dependent calcium channels are multisubunit complexes, consisting of alpha-1, alpha-2, beta and delta subunits in a 1:1:1:1 ratio. The channel activity is directed by the pore-forming and voltage-sensitive alpha-1 subunit. In many cases, this subunit is sufficient to generate voltage-sensitive calcium channel activity. The auxiliary subunits beta and alpha-2/delta linked by a disulfide bridge regulate the channel activity. Interacts with CABP1 and CABP4, resulting in a near elimination of calcium-dependent inactivation of the channel. Interacts with RIMBP2. As to expression, expressed in brain, pancreatic islets and B-lymphocytes.

Its subcellular location is the membrane. The catalysed reaction is Ca(2+)(in) = Ca(2+)(out). Functionally, voltage-sensitive calcium channels (VSCC) mediate the entry of calcium ions into excitable cells and are also involved in a variety of calcium-dependent processes, including muscle contraction, hormone or neurotransmitter release, gene expression, cell motility, cell division and cell death. The isoform alpha-1D gives rise to L-type calcium currents. Long-lasting (L-type) calcium channels belong to the 'high-voltage activated' (HVA) group. They are blocked by dihydropyridines (DHP), phenylalkylamines, and by benzothiazepines. Voltage-sensitive calcium channels (VSCC) mediate the entry of calcium ions into excitable cells and are also involved in a variety of calcium-dependent processes, including muscle contraction, hormone or neurotransmitter release, gene expression, cell motility, cell division and cell death. The isoform alpha-1D gives rise to L-type calcium currents. The chain is Voltage-dependent L-type calcium channel subunit alpha-1D (Cacna1d) from Rattus norvegicus (Rat).